Here is a 760-residue protein sequence, read N- to C-terminus: GLC7-interacting protein 4 (760 aa).

Disordered stretches follow at residues 449-573 and 593-626; these read KKKP…SLQS and KSAS…SSST. Low complexity-rich tracts occupy residues 454-474 and 494-506; these read ITKL…ASPS and SSRS…VRTT. S497 and S501 each carry phosphoserine. Positions 512–525 are enriched in basic and acidic residues; that stretch reads AETKKSVVSPEKRK. Polar residues predominate over residues 534-554; the sequence is SSSLQSYTNKQQTSYLNSTRH. Low complexity-rich tracts occupy residues 561-573 and 594-626; these read SKLN…SLQS and SAST…SSST. S609 is modified (phosphoserine).

The protein belongs to the GIP4 family. As to quaternary structure, interacts with GLC7.

The protein localises to the cytoplasm. In terms of biological role, GLC7 phosphatase-regulatory protein involved in GLC7 subcellular redistribution and chromosome segregation. This chain is GLC7-interacting protein 4 (GIP4), found in Saccharomyces cerevisiae (strain ATCC 204508 / S288c) (Baker's yeast).